We begin with the raw amino-acid sequence, 129 residues long: Histone H2B.1 (129 aa).

Residues 1 to 19 (MAPKAEKKPASKAPAEKKP) are compositionally biased toward basic and acidic residues. A disordered region spans residues 1 to 37 (MAPKAEKKPASKAPAEKKPAAKKTASTDSKKRTKTRK). N6-acetyllysine; alternate is present on residues lysine 7 and lysine 8. Residues lysine 7 and lysine 8 each participate in a glycyl lysine isopeptide (Lys-Gly) (interchain with G-Cter in SUMO); alternate cross-link. Serine 11 is modified (phosphoserine). At lysine 12 the chain carries N6-acetyllysine. Residue lysine 17 is modified to N6-acetyllysine; alternate. Residue lysine 17 forms a Glycyl lysine isopeptide (Lys-Gly) (interchain with G-Cter in SUMO); alternate linkage. Residue lysine 18 forms a Glycyl lysine isopeptide (Lys-Gly) (interchain with G-Cter in SUMO) linkage. A Glycyl lysine isopeptide (Lys-Gly) (interchain with G-Cter in ubiquitin) cross-link involves residue lysine 123.

This sequence belongs to the histone H2B family. In terms of assembly, the nucleosome is a histone octamer containing two molecules each of H2A, H2B, H3 and H4 assembled in one H3-H4 heterotetramer and two H2A-H2B heterodimers. The octamer wraps approximately 147 bp of DNA. Post-translationally, monoubiquitinated by the UBC2-BRE1 complex to form H2BK123ub1. H2BK123ub1 gives a specific tag for epigenetic transcriptional activation and is also prerequisite for H3K4me and H3K79me formation. H2BK123ub1 also modulates the formation of double-strand breaks during meiosis and is a prerequisite for DNA-damage checkpoint activation. In terms of processing, phosphorylated by STE20 to form H2BS10ph during progression through meiotic prophase. May be correlated with chromosome condensation. Acetylated by GCN5 to form H2BK11ac and H2BK16ac. H2BK16ac can also be formed by ESA1. Acetylation of N-terminal lysines and particularly formation of H2BK11acK16ac has a positive effect on transcription. Post-translationally, sumoylation to form H2BK6su or H2BK7su, and probably also H2BK16su or H2BK17su, occurs preferentially near the telomeres and represses gene transcription.

The protein resides in the nucleus. The protein localises to the chromosome. In terms of biological role, core component of nucleosome. Nucleosomes wrap and compact DNA into chromatin, limiting DNA accessibility to the cellular machineries which require DNA as a template. Histones thereby play a central role in transcription regulation, DNA repair, DNA replication and chromosomal stability. DNA accessibility is regulated via a complex set of post-translational modifications of histones, also called histone code, and nucleosome remodeling. This chain is Histone H2B.1 (HTB1), found in Meyerozyma guilliermondii (strain ATCC 6260 / CBS 566 / DSM 6381 / JCM 1539 / NBRC 10279 / NRRL Y-324) (Yeast).